The sequence spans 194 residues: Lymphocyte antigen 6 complex locus protein G5b (194 aa).

The first 18 residues, 1–18 (MRARVLVGMLTMVGFAMG), serve as a signal peptide directing secretion. The 93-residue stretch at 26–118 (RTCHLCLLED…SAQHQSTLRG (93 aa)) folds into the UPAR/Ly6 domain. 5 disulfides stabilise this stretch: Cys-28/Cys-55, Cys-31/Cys-40, Cys-47/Cys-73, Cys-81/Cys-98, and Cys-99/Cys-104. Asn-63 carries N-linked (GlcNAc...) asparagine glycosylation. N-linked (GlcNAc...) asparagine glycosylation occurs at Asn-141.

In terms of assembly, monomer. N-glycosylated.

The protein resides in the secreted. The sequence is that of Lymphocyte antigen 6 complex locus protein G5b (Ly6g5b) from Mus musculus (Mouse).